The primary structure comprises 350 residues: Probable DNA polymerase III subunit delta (350 aa).

It belongs to the DNA polymerase HolA subunit family. As to quaternary structure, component of the DNA clamp loading complex consisting of tau(3):delta(1):delta'(1). The DNA polymerase III holoenzyme complex contains at least 10 different subunits organized into 3 functionally essential subassemblies: the Pol III core, the beta sliding clamp processivity factor and the clamp-loading complex. The Pol III core (subunits alpha, epsilon and theta) contains the polymerase and the 3'-5' exonuclease proofreading activities. The polymerase is tethered to the template via the dimeric beta sliding clamp processivity factor. The DNA clamp-loading complex assembles the beta sliding clamp onto the primed template and plays a central role in the organization and communication at the replication fork.

The enzyme catalyses DNA(n) + a 2'-deoxyribonucleoside 5'-triphosphate = DNA(n+1) + diphosphate. Part of the beta sliding clamp loading complex, which hydrolyzes ATP to load the beta clamp onto primed DNA to form the DNA replication pre-initiation complex. DNA polymerase III is a complex, multichain enzyme responsible for most of the replicative synthesis in bacteria. This DNA polymerase also exhibits 3'-5' exonuclease activity. The delta subunit is the wrench that will open the beta subunit dimer. The DNA clamp loading complex (tau(3),delta,delta') is thought to load beta dimers onto DNA by binding ATP which alters the complex's conformation so it can bind beta sliding clamp dimers and open them at one interface. Primed DNA is recognized, ATP is hydrolyzed releasing the clamp loading complex and closing the beta sliding clamp ring around the primed DNA. The protein is Probable DNA polymerase III subunit delta of Aquifex aeolicus (strain VF5).